A 37-amino-acid polypeptide reads, in one-letter code: Photosystem I reaction center subunit IX (37 aa).

A helical membrane pass occupies residues 4-24 (FLSSAPVLLTAMMVFTAGLLI).

It belongs to the PsaJ family.

Its subcellular location is the cellular thylakoid membrane. Functionally, may help in the organization of the PsaE and PsaF subunits. This Picosynechococcus sp. (strain ATCC 27264 / PCC 7002 / PR-6) (Agmenellum quadruplicatum) protein is Photosystem I reaction center subunit IX.